We begin with the raw amino-acid sequence, 388 residues long: MNLHEYQAKQLFARYGLPAPVGYACTTPREAEEAASKIGAGPWVVKCQVHAGGRGKAGGVKVVNSKEDIRAFAENWLGKRLVTYQTDANGQPVNQILVEAATDIAKELYLGAVVDRSSRRVVFMASTEGGVEIEKVAEETPHLIHKVALDPLTGPMPYQGRELAFKLGLEGKLVQQFTKIFMGLATIFLERDLALIEINPLVITKQGDLICLDGKLGADGNALFRQPDLREMRDQSQEDPRAAQAAQWELNYVALDGNIGCMVNGAGLAMGTMDIVKLHGGEPANFLDVGGGATKERVTEAFKIILSDDKVKAVLVNIFGGIVRCDLIADGIIGAVAEVGVNVPVVVRLEGNNAELGAKKLADSGLNIIAAKGLTDAAQQVVAAVEGK.

An ATP-grasp domain is found at 9 to 244 (KQLFARYGLP…QSQEDPRAAQ (236 aa)). Residues lysine 46, 53–55 (GRG), glutamate 99, threonine 102, and glutamate 107 contribute to the ATP site. Residues asparagine 199 and aspartate 213 each contribute to the Mg(2+) site. Substrate is bound by residues asparagine 264 and 321–323 (GIV).

This sequence belongs to the succinate/malate CoA ligase beta subunit family. As to quaternary structure, heterotetramer of two alpha and two beta subunits. Requires Mg(2+) as cofactor.

It catalyses the reaction succinate + ATP + CoA = succinyl-CoA + ADP + phosphate. The enzyme catalyses GTP + succinate + CoA = succinyl-CoA + GDP + phosphate. The protein operates within carbohydrate metabolism; tricarboxylic acid cycle; succinate from succinyl-CoA (ligase route): step 1/1. Functionally, succinyl-CoA synthetase functions in the citric acid cycle (TCA), coupling the hydrolysis of succinyl-CoA to the synthesis of either ATP or GTP and thus represents the only step of substrate-level phosphorylation in the TCA. The beta subunit provides nucleotide specificity of the enzyme and binds the substrate succinate, while the binding sites for coenzyme A and phosphate are found in the alpha subunit. The sequence is that of Succinate--CoA ligase [ADP-forming] subunit beta from Shigella flexneri serotype 5b (strain 8401).